We begin with the raw amino-acid sequence, 477 residues long: MKVTLPEFERAGVMVVGDVMLDRYWYGPSSRISPEAPVPVVKVNTIEERPGGAANVAMNIASLGANARLVGLTGIDDAARALSKSLADVNVKCDFVSVPTHPTITKLRVLSRNQQLIRLDFEEGFEGVDPQPLHERINQALSSIGALVLSDYAKGALASVQQMIQLARKAGVPVLIDPKGTDFERYRGATLLTPNLSEFEAVVGKCKTEEEIVERGMKLIADYELSALLVTRSEQGMSLLQPGKAPLHMPTQAQEVYDVTGAGDTVIGVLAATLAAGNSLEEACFFANAAAGVVVGKLGTSTVSPIELENAVRGRADTGFGVMTEEELKLAVVAARKRGEKVVMTNGVFDILHAGHVSYLANARKLGDRLIVAVNSDASTKRLKGDSRPVNPLEQRMIVLGALEAVDWVVSFEEDTPQRLIAGILPDLLVKGGDYKPEEIAGSKEVWANGGEVLVLNFEDGCSTTNIIKKIQQDKKG.

The segment at Met1–Thr318 is ribokinase. Lys179 is subject to N6-acetyllysine. An ATP-binding site is contributed by Asn195–Glu198. The active site involves Asp264. Positions Met344–Gly477 are cytidylyltransferase.

It in the N-terminal section; belongs to the carbohydrate kinase PfkB family. The protein in the C-terminal section; belongs to the cytidylyltransferase family. Homodimer.

The catalysed reaction is D-glycero-beta-D-manno-heptose 7-phosphate + ATP = D-glycero-beta-D-manno-heptose 1,7-bisphosphate + ADP + H(+). It carries out the reaction D-glycero-beta-D-manno-heptose 1-phosphate + ATP + H(+) = ADP-D-glycero-beta-D-manno-heptose + diphosphate. The protein operates within nucleotide-sugar biosynthesis; ADP-L-glycero-beta-D-manno-heptose biosynthesis; ADP-L-glycero-beta-D-manno-heptose from D-glycero-beta-D-manno-heptose 7-phosphate: step 1/4. It functions in the pathway nucleotide-sugar biosynthesis; ADP-L-glycero-beta-D-manno-heptose biosynthesis; ADP-L-glycero-beta-D-manno-heptose from D-glycero-beta-D-manno-heptose 7-phosphate: step 3/4. Its pathway is bacterial outer membrane biogenesis; LPS core biosynthesis. Catalyzes the phosphorylation of D-glycero-D-manno-heptose 7-phosphate at the C-1 position to selectively form D-glycero-beta-D-manno-heptose-1,7-bisphosphate. Its function is as follows. Catalyzes the ADP transfer from ATP to D-glycero-beta-D-manno-heptose 1-phosphate, yielding ADP-D-glycero-beta-D-manno-heptose. The chain is Bifunctional protein HldE from Escherichia coli O157:H7.